Reading from the N-terminus, the 403-residue chain is MTQASAAPLEKTALESYVALAKPSLIGLSRPELMERLGGIGVAAAQRKMRAQQLWHWIYVRGATDFAQMTSISKELRAQLAEHFTVDRPEVVTEQISNDGTRKWLLRLPSGQAGERAHEVECVYIPETDRGTLCVSSQVGCTLNCSFCHTGTQKLVRNLTAGEIVGQVMVAKDRLGDWPMAVASTQDAGENNRLITNVVMMGMGEPLYNFEAVRDALLIVSDNEGIGLSRRRITLSTSGVVPNIFRTGDEIGVMLAISLHAVRDELRNELVPLNKKYPLKELLQACRDYPGASNARRITFEYVMLKGVNDSLDDAKLLVKLLKGVPAKINLIPFNPWPGSAYQCSDWDQIEKFSEYIFNAGYSSPVRTPRGRDILAACGQLKSETEKLSARERDALRAMAMTD.

The Proton acceptor role is filled by Glu-121. The Radical SAM core domain maps to 127–375 (ETDRGTLCVS…VRTPRGRDIL (249 aa)). A disulfide bond links Cys-134 and Cys-378. The [4Fe-4S] cluster site is built by Cys-141, Cys-145, and Cys-148. S-adenosyl-L-methionine contacts are provided by residues 204–205 (GE), Ser-236, 258–260 (SLH), and Asn-335. Cys-378 (S-methylcysteine intermediate) is an active-site residue.

This sequence belongs to the radical SAM superfamily. RlmN family. [4Fe-4S] cluster serves as cofactor.

Its subcellular location is the cytoplasm. The catalysed reaction is adenosine(2503) in 23S rRNA + 2 reduced [2Fe-2S]-[ferredoxin] + 2 S-adenosyl-L-methionine = 2-methyladenosine(2503) in 23S rRNA + 5'-deoxyadenosine + L-methionine + 2 oxidized [2Fe-2S]-[ferredoxin] + S-adenosyl-L-homocysteine. It catalyses the reaction adenosine(37) in tRNA + 2 reduced [2Fe-2S]-[ferredoxin] + 2 S-adenosyl-L-methionine = 2-methyladenosine(37) in tRNA + 5'-deoxyadenosine + L-methionine + 2 oxidized [2Fe-2S]-[ferredoxin] + S-adenosyl-L-homocysteine. Its function is as follows. Specifically methylates position 2 of adenine 2503 in 23S rRNA and position 2 of adenine 37 in tRNAs. m2A2503 modification seems to play a crucial role in the proofreading step occurring at the peptidyl transferase center and thus would serve to optimize ribosomal fidelity. The sequence is that of Dual-specificity RNA methyltransferase RlmN from Rhodopseudomonas palustris (strain BisA53).